We begin with the raw amino-acid sequence, 201 residues long: uncharacterized protein (201 aa).

This is an uncharacterized protein from Caenorhabditis elegans.